The chain runs to 134 residues: Translation initiation factor 2 subunit beta (134 aa).

This sequence belongs to the eIF-2-beta/eIF-5 family. Heterotrimer composed of an alpha, a beta and a gamma chain.

In terms of biological role, eIF-2 functions in the early steps of protein synthesis by forming a ternary complex with GTP and initiator tRNA. The polypeptide is Translation initiation factor 2 subunit beta (Pyrobaculum calidifontis (strain DSM 21063 / JCM 11548 / VA1)).